A 488-amino-acid chain; its full sequence is Surface lipoprotein assembly modifier 1 (488 aa).

An N-terminal signal peptide occupies residues 1–31 (MVIFYFCGKTFMPARNRWMLLLPLLASAAYA). An N-terminal domain region spans residues 32 to 202 (EETPREPDLR…LYRKALRERD (171 aa)). TPR repeat units follow at residues 118 to 151 (MLALYAQGILAQADGRVKEAISHYRELIAAQPDA) and 171 to 204 (AADQFDRLKAENLPPQLMEQVELYRKALRERDAW). The C-terminal probable beta barrel, partially restores export of lipoproteins stretch occupies residues 203–488 (AWKVNGGFSV…RAFVEFNKTF (286 aa)). Transmembrane regions (beta stranded) follow at residues 204–214 (WKVNGGFSVTR), 241–252 (VNYRLGAEKKWS), 257–267 (WYTTAGGDVSG), 280–291 (TAGVSGGIGFAD), 294–304 (KDAGLAVFHER), 316–325 (NGARLYFNRW), 330–340 (WQTLSSAEWGR), 354–364 (LQISNSLVFYR), 368–377 (QYWMGGLDFY), 393–402 (GLRFAWGQEW), 407–417 (LSSLLRLGAAK), 439–448 (LNTSLSLWHR), 455–464 (ITPRLTLSHR), and 478–488 (NRAFVEFNKTF).

Belongs to the Slam family. As to quaternary structure, interacts with the C-terminal domain of surface lipoprotein TbpB.

It localises to the cell outer membrane. In terms of biological role, required for correct export to the cell surface of some cell outer membrane lipoproteins both in Neisseria and heterologously in E.coli. This Neisseria meningitidis serogroup B (strain ATCC BAA-335 / MC58) protein is Surface lipoprotein assembly modifier 1.